The primary structure comprises 310 residues: Methionyl-tRNA formyltransferase (310 aa).

111–114 (SLLP) serves as a coordination point for (6S)-5,6,7,8-tetrahydrofolate.

This sequence belongs to the Fmt family.

The enzyme catalyses L-methionyl-tRNA(fMet) + (6R)-10-formyltetrahydrofolate = N-formyl-L-methionyl-tRNA(fMet) + (6S)-5,6,7,8-tetrahydrofolate + H(+). Attaches a formyl group to the free amino group of methionyl-tRNA(fMet). The formyl group appears to play a dual role in the initiator identity of N-formylmethionyl-tRNA by promoting its recognition by IF2 and preventing the misappropriation of this tRNA by the elongation apparatus. In Afipia carboxidovorans (strain ATCC 49405 / DSM 1227 / KCTC 32145 / OM5) (Oligotropha carboxidovorans), this protein is Methionyl-tRNA formyltransferase.